The chain runs to 821 residues: Lon protease (821 aa).

One can recognise a Lon N-terminal domain in the interval 18–216 (LPLMSLREVV…KVYELLQGEI (199 aa)). Position 368-375 (368-375 (GPPGVGKT)) interacts with ATP. Residues 606–787 (TSQVGVCTGL…DEVLPQALMA (182 aa)) form the Lon proteolytic domain. Active-site residues include S693 and K736.

It belongs to the peptidase S16 family. In terms of assembly, homohexamer. Organized in a ring with a central cavity.

The protein resides in the cytoplasm. The enzyme catalyses Hydrolysis of proteins in presence of ATP.. In terms of biological role, ATP-dependent serine protease that mediates the selective degradation of mutant and abnormal proteins as well as certain short-lived regulatory proteins. Required for cellular homeostasis and for survival from DNA damage and developmental changes induced by stress. Degrades polypeptides processively to yield small peptide fragments that are 5 to 10 amino acids long. Binds to DNA in a double-stranded, site-specific manner. This chain is Lon protease, found in Nitratidesulfovibrio vulgaris (strain ATCC 29579 / DSM 644 / CCUG 34227 / NCIMB 8303 / VKM B-1760 / Hildenborough) (Desulfovibrio vulgaris).